We begin with the raw amino-acid sequence, 394 residues long: Chaperone protein DnaJ (394 aa).

The J domain occupies 4-68; that stretch reads DYYEILGVSR…ELKARYDRFG (65 aa). Residues 136–218 form a CR-type zinc finger; it reads GGEKQIRISH…CNGEGLAQTT (83 aa). Zn(2+) is bound by residues C149, C152, C166, C169, C192, C195, C206, and C209. 4 CXXCXGXG motif repeats span residues 149–156, 166–173, 192–199, and 206–213; these read CNVCGGSG, CPTCGGSG, and CYNCNGEG.

The protein belongs to the DnaJ family. As to quaternary structure, homodimer. Zn(2+) is required as a cofactor.

It is found in the cytoplasm. Its function is as follows. Participates actively in the response to hyperosmotic and heat shock by preventing the aggregation of stress-denatured proteins and by disaggregating proteins, also in an autonomous, DnaK-independent fashion. Unfolded proteins bind initially to DnaJ; upon interaction with the DnaJ-bound protein, DnaK hydrolyzes its bound ATP, resulting in the formation of a stable complex. GrpE releases ADP from DnaK; ATP binding to DnaK triggers the release of the substrate protein, thus completing the reaction cycle. Several rounds of ATP-dependent interactions between DnaJ, DnaK and GrpE are required for fully efficient folding. Also involved, together with DnaK and GrpE, in the DNA replication of plasmids through activation of initiation proteins. The chain is Chaperone protein DnaJ from Synechococcus sp. (strain JA-2-3B'a(2-13)) (Cyanobacteria bacterium Yellowstone B-Prime).